A 269-amino-acid polypeptide reads, in one-letter code: Formamidopyrimidine-DNA glycosylase (269 aa).

Pro-2 serves as the catalytic Schiff-base intermediate with DNA. Glu-3 acts as the Proton donor in catalysis. Lys-57 (proton donor; for beta-elimination activity) is an active-site residue. Residues His-90, Arg-109, and Lys-150 each contribute to the DNA site. Residues Gln-235–Lys-269 form an FPG-type zinc finger. Residue Arg-259 is the Proton donor; for delta-elimination activity of the active site.

Belongs to the FPG family. In terms of assembly, monomer. It depends on Zn(2+) as a cofactor.

The catalysed reaction is Hydrolysis of DNA containing ring-opened 7-methylguanine residues, releasing 2,6-diamino-4-hydroxy-5-(N-methyl)formamidopyrimidine.. It catalyses the reaction 2'-deoxyribonucleotide-(2'-deoxyribose 5'-phosphate)-2'-deoxyribonucleotide-DNA = a 3'-end 2'-deoxyribonucleotide-(2,3-dehydro-2,3-deoxyribose 5'-phosphate)-DNA + a 5'-end 5'-phospho-2'-deoxyribonucleoside-DNA + H(+). Involved in base excision repair of DNA damaged by oxidation or by mutagenic agents. Acts as a DNA glycosylase that recognizes and removes damaged bases. Has a preference for oxidized purines, such as 7,8-dihydro-8-oxoguanine (8-oxoG). Has AP (apurinic/apyrimidinic) lyase activity and introduces nicks in the DNA strand. Cleaves the DNA backbone by beta-delta elimination to generate a single-strand break at the site of the removed base with both 3'- and 5'-phosphates. The chain is Formamidopyrimidine-DNA glycosylase from Salmonella enteritidis PT4 (strain P125109).